The sequence spans 173 residues: Atrial gland and califin peptides (173 aa).

The N-terminal stretch at 1–21 (MKANTMFIILCLSLSTLCVSS) is a signal peptide. The propeptide occupies 22 to 34 (QSTSVHGKIFVPN). Ile-69 carries the post-translational modification Isoleucine amide. A propeptide spanning residues 73-114 (AAGEMEQSEGQNPETKSHSWRKRSVLTPSLSSLGESLESGIS) is cleaved from the precursor. Residues 75–94 (GEMEQSEGQNPETKSHSWRK) form a disordered region. The cysteines at positions 141 and 172 are disulfide-linked. Residue Leu-152 is modified to Leucine amide.

The protein belongs to the molluscan ELH family. As to quaternary structure, califin A consists of a 36-residue large subunit bound by a single disulfide bond to a 18-residue small subunit.

Its subcellular location is the secreted. Functionally, the atrial gland peptide A and peptide B precursors are the source of the 2 peptides that, upon release from this reproductive system gland, initiate the egg-laying process by exciting the bag cell neurons. These neurons, clustered in neural connectives near the abdominal ganglion, in turn release other peptides that act directly on the ganglion and also, via the circulating hemolymph, on many other organs to control the physiological processes of egg-laying. One of these other peptides is the egg-laying hormone. In terms of biological role, injected in sexually mature animals califin A excites LB and LC cells of the abdominal ganglion and causes egg-laying. This chain is Atrial gland and califin peptides, found in Aplysia californica (California sea hare).